A 325-amino-acid chain; its full sequence is Small ribosomal subunit protein RACK1 (325 aa).

7 WD repeats span residues glutamine 5–aspartate 48, isoleucine 58–asparagine 99, glutamine 100–leucine 141, glutamine 143–glycine 186, asparagine 187–leucine 227, asparagine 228–glutamate 268, and aspartate 269–serine 320.

It belongs to the WD repeat G protein beta family. Ribosomal protein RACK1 subfamily.

Functionally, required for the expression of antimicrobial peptide nlp-29 in response to fungal infection or physical injury. The sequence is that of Small ribosomal subunit protein RACK1 (rack-1) from Caenorhabditis elegans.